The sequence spans 58 residues: Metallothionein (58 aa).

The segment at 1–29 (PDPCCAEGTCECEEGKCKAGCKCTSCRCS) is beta. 18 residues coordinate a divalent metal cation: cysteine 4, cysteine 5, cysteine 10, cysteine 12, cysteine 17, cysteine 21, cysteine 23, cysteine 26, cysteine 28, cysteine 31, cysteine 34, cysteine 38, cysteine 40, cysteine 46, cysteine 50, cysteine 54, cysteine 56, and cysteine 57. The interval 30 to 58 (PCEKCTSECECKSKEECAKNCTKPCSCCP) is alpha.

Metallothioneins have a high content of cysteine residues that bind various heavy metals. Class I MTS in crustacea are involved in the sequestration of elevated levels of heavy-metal ions. The protein is Metallothionein of Potamon potamios.